The following is a 237-amino-acid chain: Uridylate kinase (237 aa).

12-15 (KLSG) contributes to the ATP binding site. An involved in allosteric activation by GTP region spans residues 20–25 (GDEGFG). Gly-54 contributes to the UMP binding site. ATP is bound by residues Gly-55 and Arg-59. UMP-binding positions include Asp-74 and 135–142 (TGSPFFTT). Residues Thr-162, Tyr-168, and Asp-171 each contribute to the ATP site.

Belongs to the UMP kinase family. Homohexamer.

It is found in the cytoplasm. It catalyses the reaction UMP + ATP = UDP + ADP. It functions in the pathway pyrimidine metabolism; CTP biosynthesis via de novo pathway; UDP from UMP (UMPK route): step 1/1. Its activity is regulated as follows. Allosterically activated by GTP. Inhibited by UTP. In terms of biological role, catalyzes the reversible phosphorylation of UMP to UDP. The chain is Uridylate kinase from Mannheimia succiniciproducens (strain KCTC 0769BP / MBEL55E).